A 393-amino-acid polypeptide reads, in one-letter code: Pre-mRNA-splicing regulator WTAP (393 aa).

A disordered region spans residues 242–393; that stretch reads QIQISGNRTP…SSVNVQGSVL (152 aa). A compositionally biased stretch (basic and acidic residues) spans 254 to 267; that stretch reads EPKDEGETSGKDCG. 2 stretches are compositionally biased toward polar residues: residues 272-286 and 321-353; these read GPSN…THSS and DGSS…SNDT. Positions 354 to 365 are enriched in basic and acidic residues; the sequence is DSNHDSQEEKPV. Residues 369 to 393 are compositionally biased toward polar residues; the sequence is GNRTVSSRHLQNGLDSSVNVQGSVL.

Belongs to the fl(2)d family. Component of the WMM complex, a N6-methyltransferase complex composed of a catalytic subcomplex, named MAC, and of an associated subcomplex, named MACOM. Component of the MACOM subcomplex.

It is found in the nucleus speckle. The protein localises to the nucleus. It localises to the nucleoplasm. Its function is as follows. Associated component of the WMM complex, a complex that mediates N6-methyladenosine (m6A) methylation of RNAs, a modification that plays a role in the efficiency of mRNA splicing and RNA processing. The chain is Pre-mRNA-splicing regulator WTAP from Xenopus laevis (African clawed frog).